Here is a 342-residue protein sequence, read N- to C-terminus: UDP-3-O-(3-hydroxymyristoyl)glucosamine N-acyltransferase (342 aa).

H239 serves as the catalytic Proton acceptor.

The protein belongs to the transferase hexapeptide repeat family. LpxD subfamily. Homotrimer.

It carries out the reaction a UDP-3-O-[(3R)-3-hydroxyacyl]-alpha-D-glucosamine + a (3R)-hydroxyacyl-[ACP] = a UDP-2-N,3-O-bis[(3R)-3-hydroxyacyl]-alpha-D-glucosamine + holo-[ACP] + H(+). The enzyme catalyses UDP-3-O-[(3R)-3-hydroxytetradecanoyl]-alpha-D-glucosamine + (3R)-hydroxytetradecanoyl-[ACP] = UDP-2-N,3-O-bis[(3R)-3-hydroxytetradecanoyl]-alpha-D-glucosamine + holo-[ACP] + H(+). It participates in glycolipid biosynthesis; lipid IV(A) biosynthesis; lipid IV(A) from (3R)-3-hydroxytetradecanoyl-[acyl-carrier-protein] and UDP-N-acetyl-alpha-D-glucosamine: step 3/6. Its function is as follows. Catalyzes the N-acylation of UDP-3-O-(hydroxytetradecanoyl)glucosamine using 3-hydroxytetradecanoyl-ACP as the acyl donor. Is involved in the biosynthesis of lipid A, a phosphorylated glycolipid that anchors the lipopolysaccharide to the outer membrane of the cell. This chain is UDP-3-O-(3-hydroxymyristoyl)glucosamine N-acyltransferase, found in Photorhabdus laumondii subsp. laumondii (strain DSM 15139 / CIP 105565 / TT01) (Photorhabdus luminescens subsp. laumondii).